Consider the following 384-residue polypeptide: 8-amino-7-oxononanoate synthase (384 aa).

R21 lines the substrate pocket. Residue 108-109 participates in pyridoxal 5'-phosphate binding; the sequence is GF. Residue H133 participates in substrate binding. 3 residues coordinate pyridoxal 5'-phosphate: S179, H207, and T233. At K236 the chain carries N6-(pyridoxal phosphate)lysine. A substrate-binding site is contributed by T352.

Belongs to the class-II pyridoxal-phosphate-dependent aminotransferase family. BioF subfamily. As to quaternary structure, homodimer. Requires pyridoxal 5'-phosphate as cofactor.

The enzyme catalyses 6-carboxyhexanoyl-[ACP] + L-alanine + H(+) = (8S)-8-amino-7-oxononanoate + holo-[ACP] + CO2. The protein operates within cofactor biosynthesis; biotin biosynthesis. Its function is as follows. Catalyzes the decarboxylative condensation of pimeloyl-[acyl-carrier protein] and L-alanine to produce 8-amino-7-oxononanoate (AON), [acyl-carrier protein], and carbon dioxide. This chain is 8-amino-7-oxononanoate synthase, found in Enterobacter sp. (strain 638).